Here is a 411-residue protein sequence, read N- to C-terminus: MMP alpha-(1-&gt;4)-mannosyltransferase (411 aa).

It belongs to the glycosyltransferase group 1 family. Glycosyltransferase 4 subfamily.

It carries out the reaction [3-O-methyl-alpha-D-mannosyl-(1-&gt;4)](n)-3-O-methyl-D-mannose + GDP-alpha-D-mannose = alpha-D-mannosyl-(1-&gt;4)-[3-O-methyl-alpha-D-mannosyl-(1-&gt;4)](n)-3-O-methyl-D-mannose + GDP + H(+). The catalysed reaction is [3-O-methyl-alpha-D-mannosyl-(1-&gt;4)](n)-1-O,3-O-dimethyl-alpha-D-mannose + GDP-alpha-D-mannose = alpha-D-mannosyl-(1-&gt;4)-[3-O-methyl-alpha-D-mannosyl-(1-&gt;4)](n)-1-O,3-O-dimethyl-alpha-D-mannose + GDP + H(+). Its activity is regulated as follows. Activity is significantly enhanced in the presence of Mg(2+). Its function is as follows. Glycosyltransferase involved in the biosynthesis of 3-O-methylmannose polysaccharides (MMP), which are intracellular polymethylated polysaccharides implicated in the modulation of fatty acid metabolism in non-tuberculous mycobacteria. Highly specific alpha-(1-&gt;4)-mannosyltransferase that can transfer mannose units from GDP-mannose to a wide range of alpha-(1-&gt;4) oligomannosides longer than three mannoses, including all hydrolytic products of MmpH. Can use synthetic trimannosides and tetramannosides as substrates, but not mono- and disaccharides, and is significantly more active with the methylated substrates, preferring the tetramannosides over the trimannosides. This chain is MMP alpha-(1-&gt;4)-mannosyltransferase, found in Mycolicibacterium hassiacum (strain DSM 44199 / CIP 105218 / JCM 12690 / 3849) (Mycobacterium hassiacum).